We begin with the raw amino-acid sequence, 143 residues long: Transcriptional regulator MraZ (143 aa).

2 consecutive SpoVT-AbrB domains span residues 5-47 (EYDH…TLDE) and 76-119 (AVEV…DRET).

The protein belongs to the MraZ family. In terms of assembly, forms oligomers.

The protein resides in the cytoplasm. Its subcellular location is the nucleoid. The polypeptide is Transcriptional regulator MraZ (Staphylococcus aureus (strain Mu3 / ATCC 700698)).